The following is a 368-amino-acid chain: tRNA 2-selenouridine synthase (368 aa).

The 124-residue stretch at 15–138 (FLNQHPIMDV…LRQYLIGVIE (124 aa)) folds into the Rhodanese domain. C98 (S-selanylcysteine intermediate) is an active-site residue.

Belongs to the SelU family. As to quaternary structure, monomer.

The catalysed reaction is 5-methylaminomethyl-2-thiouridine(34) in tRNA + selenophosphate + (2E)-geranyl diphosphate + H2O + H(+) = 5-methylaminomethyl-2-selenouridine(34) in tRNA + (2E)-thiogeraniol + phosphate + diphosphate. It carries out the reaction 5-methylaminomethyl-2-thiouridine(34) in tRNA + (2E)-geranyl diphosphate = 5-methylaminomethyl-S-(2E)-geranyl-thiouridine(34) in tRNA + diphosphate. The enzyme catalyses 5-methylaminomethyl-S-(2E)-geranyl-thiouridine(34) in tRNA + selenophosphate + H(+) = 5-methylaminomethyl-2-(Se-phospho)selenouridine(34) in tRNA + (2E)-thiogeraniol. It catalyses the reaction 5-methylaminomethyl-2-(Se-phospho)selenouridine(34) in tRNA + H2O = 5-methylaminomethyl-2-selenouridine(34) in tRNA + phosphate. Functionally, involved in the post-transcriptional modification of the uridine at the wobble position (U34) of tRNA(Lys), tRNA(Glu) and tRNA(Gln). Catalyzes the conversion of 2-thiouridine (S2U-RNA) to 2-selenouridine (Se2U-RNA). Acts in a two-step process involving geranylation of 2-thiouridine (S2U) to S-geranyl-2-thiouridine (geS2U) and subsequent selenation of the latter derivative to 2-selenouridine (Se2U) in the tRNA chain. The chain is tRNA 2-selenouridine synthase from Shewanella baltica (strain OS223).